The primary structure comprises 1523 residues: Dicer-like protein 1 (1523 aa).

The segment covering 24-38 (LNLSGERTISTTEPT) has biased composition (polar residues). Positions 24–58 (LNLSGERTISTTEPTEGNDSSSEESGDNEQISTQR) are disordered. The 182-residue stretch at 123–304 (LFERAKSQNT…ESATKLEVLL (182 aa)) folds into the Helicase ATP-binding domain. An ATP-binding site is contributed by 136–143 (LDTGSGKT). The DEAH box motif lies at 249 to 252 (DEAH). One can recognise a Helicase C-terminal domain in the interval 444–617 (LLRQKLIKYF…GIDSEIDSIL (174 aa)). The region spanning 640 to 730 (ALAILARYAS…NSVYHRRLPA (91 aa)) is the Dicer dsRNA-binding fold domain. Positions 879 to 1007 (ELLHLVHENE…VCIEPLRISA (129 aa)) constitute a PAZ domain. 2 consecutive RNase III domains span residues 1031–1190 (IALE…LSGG) and 1241–1392 (GRKV…VDSD). 3 residues coordinate Mg(2+): E1281, D1378, and E1381. Residues 1426 to 1494 (TFLQNRLTNE…SEKALSVLEN (69 aa)) enclose the DRBM domain. Zn(2+) is bound by residues C1438, H1465, C1506, and C1508.

This sequence belongs to the helicase family. Dicer subfamily. It depends on Mg(2+) as a cofactor. Mn(2+) is required as a cofactor.

Dicer-like endonuclease involved in cleaving double-stranded RNA in the RNA interference (RNAi) pathway. Produces 21 to 25 bp dsRNAs (siRNAs) which target the selective destruction of homologous RNAs leading to sequence-specific suppression of gene expression, called post-transcriptional gene silencing (PTGS). Part of a broad host defense response against viral infection and transposons. In Aspergillus oryzae (strain ATCC 42149 / RIB 40) (Yellow koji mold), this protein is Dicer-like protein 1 (dcl1).